The sequence spans 166 residues: Transmembrane protein 278 (166 aa).

Residues 1–15 (MSDQERETEEDEGGD) show a composition bias toward acidic residues. Positions 1–28 (MSDQERETEEDEGGDPSDTAPMLPQRLP) are disordered. 3 helical membrane passes run 39–59 (GWAS…WALA), 65–85 (LLLP…VVYL), and 111–131 (AAVI…ASAA).

The protein belongs to the TMEM88 family.

The protein resides in the membrane. The polypeptide is Transmembrane protein 278 (TMEM278) (Bos taurus (Bovine)).